The following is a 590-amino-acid chain: MSTRLSKLFVRTLREDPVDAEVASHRLLVRAGYIRRQAPGIFAWLPLGLRVKNKVEAIVREEMERIGAQEVHFPALLPAEPYQATGRYDEYGPGMFRLEDRKRAPMVLAPTHEEFFALLVKDLYSSYKDLPLSIYQIQDKYRDEARPRAGILRGREFTMKDAYSFDHTDAGLAVSYQAQRDAYERIFQRLGLEYVIVAADAGAMGGSKSEEFLHPTPIGEDTFVRSPGGYAANVEAFTTLVPESIPIEGQPAARVFDSPDTPTIQTLVDLANAREPREDGRAWTAADTLKNIVLALTHLDGTRELVVVGIPGDRDIDLKRAEVAFFPAEVEAANDGDLAKNPGLVKGYIGPWSPEGPVLGSTSSTKVRYVVDPRVVDGSSWITGANVAGKHVLSLVAGRDFTPDGVVEAADVRDGDPAPDGSGPISTARGTEIGHVFELGRKYAEALGLKVLDENGKLVTVTMGSYGIGITRNLALVAEATQDGRGLLWPASISPFDVHVVMTGKDPAVGTAAEELVDALDAAGLDVLFDDRPKVSPGVKFGDAELIGVPTVVIVGRGAVDGMAELWDRRTNERTPVALADVAGALTAAR.

This sequence belongs to the class-II aminoacyl-tRNA synthetase family. ProS type 1 subfamily. As to quaternary structure, homodimer.

Its subcellular location is the cytoplasm. It carries out the reaction tRNA(Pro) + L-proline + ATP = L-prolyl-tRNA(Pro) + AMP + diphosphate. Catalyzes the attachment of proline to tRNA(Pro) in a two-step reaction: proline is first activated by ATP to form Pro-AMP and then transferred to the acceptor end of tRNA(Pro). As ProRS can inadvertently accommodate and process non-cognate amino acids such as alanine and cysteine, to avoid such errors it has two additional distinct editing activities against alanine. One activity is designated as 'pretransfer' editing and involves the tRNA(Pro)-independent hydrolysis of activated Ala-AMP. The other activity is designated 'posttransfer' editing and involves deacylation of mischarged Ala-tRNA(Pro). The misacylated Cys-tRNA(Pro) is not edited by ProRS. This is Proline--tRNA ligase from Clavibacter sepedonicus (Clavibacter michiganensis subsp. sepedonicus).